A 282-amino-acid polypeptide reads, in one-letter code: Bifunctional protein FolD (282 aa).

NADP(+) is bound by residues 165 to 167 (GRS), Ser190, and Thr231.

Belongs to the tetrahydrofolate dehydrogenase/cyclohydrolase family. In terms of assembly, homodimer.

It carries out the reaction (6R)-5,10-methylene-5,6,7,8-tetrahydrofolate + NADP(+) = (6R)-5,10-methenyltetrahydrofolate + NADPH. It catalyses the reaction (6R)-5,10-methenyltetrahydrofolate + H2O = (6R)-10-formyltetrahydrofolate + H(+). The protein operates within one-carbon metabolism; tetrahydrofolate interconversion. Catalyzes the oxidation of 5,10-methylenetetrahydrofolate to 5,10-methenyltetrahydrofolate and then the hydrolysis of 5,10-methenyltetrahydrofolate to 10-formyltetrahydrofolate. The protein is Bifunctional protein FolD of Clostridium botulinum (strain Alaska E43 / Type E3).